We begin with the raw amino-acid sequence, 139 residues long: MSTEEEYIKLLDRLYSKLPERVQKVSGQSLPNLIILSIGNNTIIKNFSEYCDRIRREDKLCAKFILKELAAPGNVDENGQLVIQGKFSSASINKIMERFIKTYVQCSTCKSLDTVLIKEKKAWYISCLACGAKTPVKPL.

It belongs to the eIF-2-beta/eIF-5 family. As to quaternary structure, heterotrimer composed of an alpha, a beta and a gamma chain.

In terms of biological role, eIF-2 functions in the early steps of protein synthesis by forming a ternary complex with GTP and initiator tRNA. The protein is Translation initiation factor 2 subunit beta of Sulfurisphaera tokodaii (strain DSM 16993 / JCM 10545 / NBRC 100140 / 7) (Sulfolobus tokodaii).